The chain runs to 244 residues: Short-chain dehydrogenase/reductase family member NovK (244 aa).

NADP(+) contacts are provided by residues Gly-9–Glu-12, Glu-59–Leu-60, and Arg-154–Asp-158.

The protein belongs to the short-chain dehydrogenases/reductases (SDR) family. In terms of assembly, heterotetramer; the NovJ(2)K(2) heterotetramer is composed of subunits of 2 NovJ and 2 subunits of NovK.

It participates in antibiotic biosynthesis; novobiocin biosynthesis. Its function is as follows. Non-catalytic subunit of the NovJ(2)K(2) heterotetramer that catalyzes the NADPH-dependent reduction of the tyrosyl moiety of L-beta-OH-Tyr-S-NovH intermediate to yield the tethered beta-ketotyrosyl-S-NovH in the novobiocin biosynthesis pathway. Novobiocin is an aminocoumarin family antibiotic that targets bacterial DNA gyrases. The sequence is that of Short-chain dehydrogenase/reductase family member NovK (novK) from Streptomyces niveus (Streptomyces spheroides).